The following is a 147-amino-acid chain: Hemoglobin subunit epsilon (147 aa).

Residues 3-147 (HFTAEEKATV…VANALAHKYH (145 aa)) form the Globin domain. Phosphoserine is present on residues Ser-14 and Ser-51. Heme b contacts are provided by His-64 and His-93.

Belongs to the globin family. Heterotetramer of two alpha chains and two epsilon chains in early embryonic hemoglobin Gower-2; two zeta chains and two epsilon chains in early embryonic hemoglobin Gower-1. In terms of tissue distribution, red blood cells.

The epsilon chain is a beta-type chain of early mammalian embryonic hemoglobin. The chain is Hemoglobin subunit epsilon (HBE1) from Bradypus tridactylus (Pale-throated three-toed sloth).